We begin with the raw amino-acid sequence, 35 residues long: Photosystem II reaction center protein T (35 aa).

A helical transmembrane segment spans residues 3–23 (ALVYTFLLVSTLGIIFFAIFF).

This sequence belongs to the PsbT family. As to quaternary structure, PSII is composed of 1 copy each of membrane proteins PsbA, PsbB, PsbC, PsbD, PsbE, PsbF, PsbH, PsbI, PsbJ, PsbK, PsbL, PsbM, PsbT, PsbY, PsbZ, Psb30/Ycf12, at least 3 peripheral proteins of the oxygen-evolving complex and a large number of cofactors. It forms dimeric complexes.

The protein resides in the plastid. It localises to the chloroplast thylakoid membrane. Its function is as follows. Found at the monomer-monomer interface of the photosystem II (PS II) dimer, plays a role in assembly and dimerization of PSII. PSII is a light-driven water plastoquinone oxidoreductase, using light energy to abstract electrons from H(2)O, generating a proton gradient subsequently used for ATP formation. This is Photosystem II reaction center protein T from Suaeda aralocaspica (Seablite).